The sequence spans 166 residues: NADH-ubiquinone oxidoreductase chain 6 (166 aa).

The next 5 membrane-spanning stretches (helical) occupy residues 1–21 (MMYFVYLLSILLVLGFMAFAS), 26–46 (IYGGLSLVLSGGVGCGIVVSL), 47–67 (GGSFLGLIVFLVYLGGMLVVF), 87–107 (VFTNLLIMVGMLGVIWYYFSG), and 139–159 (CGGWELIFSGWILFLTIFVVL).

It belongs to the complex I subunit 6 family. Core subunit of respiratory chain NADH dehydrogenase (Complex I) which is composed of 45 different subunits.

It is found in the mitochondrion inner membrane. It catalyses the reaction a ubiquinone + NADH + 5 H(+)(in) = a ubiquinol + NAD(+) + 4 H(+)(out). Functionally, core subunit of the mitochondrial membrane respiratory chain NADH dehydrogenase (Complex I) which catalyzes electron transfer from NADH through the respiratory chain, using ubiquinone as an electron acceptor. Essential for the catalytic activity and assembly of complex I. This is NADH-ubiquinone oxidoreductase chain 6 (MT-ND6) from Ornithorhynchus anatinus (Duckbill platypus).